We begin with the raw amino-acid sequence, 212 residues long: MAKQYDVLFRLLLIGDSGVGKTCLLCRFTDNEFHSSHISTIGVDFKMKTIEVDGIKVRIQIWDTAGQERYQTITKQYYRRAQGIFLVYDISSERSYQHIMKWVSDVDEYAPEGVQKILIGNKADEEQKRQVGREQGQQLAKEYGMDFYETSACTNLNIKESFTRLTELVLQAHRKELEGLRMRASNELALAELEEEEGKPEGPANSSKTCWC.

Positions 17, 18, 19, 20, 21, 22, 23, 35, 39, and 40 each coordinate GTP. T22 is a Mg(2+) binding site. 2 consecutive short sequence motifs (switch) follow at residues 31–45 and 63–80; these read NEFH…GVDF and DTAG…YYRR. Residues T40 and D63 each coordinate Mg(2+). G66, N121, K122, D124, S151, and A152 together coordinate GTP. The tract at residues 193–212 is disordered; the sequence is LEEEEGKPEGPANSSKTCWC. 2 S-geranylgeranyl cysteine lipidation sites follow: C210 and C212. C212 carries the post-translational modification Cysteine methyl ester.

Belongs to the small GTPase superfamily. Rab family. In terms of assembly, the GTP bound form of RAB15 interacts with REP15. Interacts (GTP-bound form) with MICAL1, MICAL3, MICALCL, EHBP1 and EHBP1L1. It depends on Mg(2+) as a cofactor.

The protein localises to the cell membrane. The catalysed reaction is GTP + H2O = GDP + phosphate + H(+). Its activity is regulated as follows. Regulated by guanine nucleotide exchange factors (GEFs) which promote the exchange of bound GDP for free GTP. Regulated by GTPase activating proteins (GAPs) which increase the GTP hydrolysis activity. Inhibited by GDP dissociation inhibitors (GDIs). The small GTPases Rab are key regulators of intracellular membrane trafficking, from the formation of transport vesicles to their fusion with membranes. Rabs cycle between an inactive GDP-bound form and an active GTP-bound form that is able to recruit to membranes different sets of downstream effectors directly responsible for vesicle formation, movement, tethering and fusion. RAB15 may act in concert with RAB3A in regulating aspects of synaptic vesicle membrane flow within the nerve terminal. The protein is Ras-related protein Rab-15 of Homo sapiens (Human).